Here is a 98-residue protein sequence, read N- to C-terminus: Large ribosomal subunit protein uL23 (98 aa).

It belongs to the universal ribosomal protein uL23 family. As to quaternary structure, part of the 50S ribosomal subunit. Contacts protein L29, and trigger factor when it is bound to the ribosome.

Functionally, one of the early assembly proteins it binds 23S rRNA. One of the proteins that surrounds the polypeptide exit tunnel on the outside of the ribosome. Forms the main docking site for trigger factor binding to the ribosome. The sequence is that of Large ribosomal subunit protein uL23 from Rickettsia prowazekii (strain Madrid E).